A 567-amino-acid chain; its full sequence is Allo-aromadendrene synthase TPS4FN (567 aa).

(2E,6E)-farnesyl diphosphate is bound by residues Arg-282, Asp-319, Asp-323, Arg-462, and Asp-465. 2 residues coordinate Mg(2+): Asp-319 and Asp-323. The DDXXD motif signature appears at 319–323 (DDIYD). Mg(2+) contacts are provided by Asp-465 and Glu-473.

The protein belongs to the terpene synthase family. Tpsb subfamily. It depends on Mg(2+) as a cofactor. The cofactor is Mn(2+).

It catalyses the reaction (2E,6E)-farnesyl diphosphate = alpha-humulene + diphosphate. The catalysed reaction is (2E,6E)-farnesyl diphosphate = (+)-valencene + diphosphate. It carries out the reaction (2E)-geranyl diphosphate = beta-myrcene + diphosphate. The enzyme catalyses (2E,6E)-farnesyl diphosphate = allo-aromadendrene + diphosphate. It catalyses the reaction (2E,6E)-farnesyl diphosphate + H2O = palustrol + diphosphate. It participates in secondary metabolite biosynthesis; terpenoid biosynthesis. Its function is as follows. Involved in sesquiterpene olefins biosynthesis, constituants of cannabinoids and terpenoids-rich resins. Catalyzes mainly the conversion of (2E)-farnesyl diphosphate to allo-aromadendrene, and also produces minor products such as alpha-humulene, valencene and palustrol. Can also use (2E)-geranyl diphosphate as substrate with low efficiency, producing minor amounts of myrcene. The protein is Allo-aromadendrene synthase TPS4FN of Cannabis sativa (Hemp).